Here is a 606-residue protein sequence, read N- to C-terminus: MSSVKSGKSWIRQPIVVVLGHVDHGKTTLLDKIRGTAVAKKEPGEITQHVGASIVPASVLRKVAEPLKKYFPKLKIEIPGLLFVDTPGHELFSNLRRRGGSVADIAILVVDIMEGFQPQTWESIQILKERKVPFIVAANKIDRIPGWKPNHDQPFLETIRKQDPRIVSRLEELIYRLISQLYEAGFMAERFDRVKDFRTTVAIVPVSAKTGEGVPELLALLTGLVQRFMKKRLVTSEEPAKGVVLEVKEEPGLGTTIDVIIYDGVIRRGDTIVVGGKDKPIVTKVRALLMPRPLQDMRAHEGKFVSVEQVVAATGVKISAPDLDNALAGSPIFVVPSEDKIEEYIKIVKEEIESVRIKTDNIGVVVKADTLGTLEAVVEALKRENIPVRLADVGPVSKNDVLEASVSKNHRPEYGVIIAFNVKILPEAEEYAARENVKIFRHNVIYKLIEDYIGWVKQLREQEKIKELESLIRPGKIRILPGYIFRRSNPAIVGVEVIGGVIKPGYPLMRKDGMRLGTIMQIRDRDNVLKEARAGQSVAISIRGRILVGRHVDEGDILYTDIPKQHVHLWLTKYKNELSDDEKMVLKEIIEIKKKQDPFYGLVFGS.

The region spanning 11-230 is the tr-type G domain; that stretch reads IRQPIVVVLG…LTGLVQRFMK (220 aa). Residues 20–27 form a G1 region; the sequence is GHVDHGKT. A GTP-binding site is contributed by 20–27; it reads GHVDHGKT. The tract at residues 45–49 is G2; sequence EITQH. The G3 stretch occupies residues 85 to 88; the sequence is DTPG. GTP-binding positions include 85–89 and 139–142; these read DTPGH and NKID. Residues 139–142 form a G4 region; that stretch reads NKID. The interval 207 to 209 is G5; it reads SAK.

It belongs to the TRAFAC class translation factor GTPase superfamily. Classic translation factor GTPase family. IF-2 subfamily.

Function in general translation initiation by promoting the binding of the formylmethionine-tRNA to ribosomes. Seems to function along with eIF-2. The chain is Probable translation initiation factor IF-2 from Staphylothermus marinus (strain ATCC 43588 / DSM 3639 / JCM 9404 / F1).